A 521-amino-acid polypeptide reads, in one-letter code: uncharacterized protein (521 aa).

The signal sequence occupies residues 1–22 (MGFKLKGFGFLTLFASQAFLTA). The N-palmitoyl cysteine moiety is linked to residue Cys23. A lipid anchor (S-diacylglycerol cysteine) is attached at Cys23.

This sequence belongs to the MG067/MG068/MG395 family.

The protein localises to the cell membrane. This is an uncharacterized protein from Mycoplasma pneumoniae (strain ATCC 29342 / M129 / Subtype 1) (Mycoplasmoides pneumoniae).